The primary structure comprises 103 residues: N(4)-acetylcytidine amidohydrolase (103 aa).

Positions 6-94 (ITFFQRFQND…IAEIYPNQTQ (89 aa)) constitute an ASCH domain. Lys21 functions as the Proton acceptor in the catalytic mechanism. Residue Thr24 is the Nucleophile of the active site. The Proton donor role is filled by Glu74.

It belongs to the N(4)-acetylcytidine amidohydrolase family.

It carries out the reaction N(4)-acetylcytidine + H2O = cytidine + acetate + H(+). It catalyses the reaction N(4)-acetyl-2'-deoxycytidine + H2O = 2'-deoxycytidine + acetate + H(+). The catalysed reaction is N(4)-acetylcytosine + H2O = cytosine + acetate + H(+). In terms of biological role, catalyzes the hydrolysis of N(4)-acetylcytidine (ac4C). In Salmonella typhi, this protein is N(4)-acetylcytidine amidohydrolase (yqfB).